The primary structure comprises 264 residues: Virulence plasmid ParA family protein pGP5-D (264 aa).

Residue 9 to 16 participates in ATP binding; it reads FKGGTGKT.

It belongs to the ParA family.

Its function is as follows. Required for growth within mammalian cells. The polypeptide is Virulence plasmid ParA family protein pGP5-D (Chlamydia trachomatis).